The sequence spans 631 residues: Chaperone protein DnaK (631 aa).

At threonine 197 the chain carries Phosphothreonine; by autocatalysis. The interval 598 to 631 (MYKKEQGQTGGTEQGGTEQKKSGGDDDVIDAEVE) is disordered. The span at 622 to 631 (DDDVIDAEVE) shows a compositional bias: acidic residues.

This sequence belongs to the heat shock protein 70 family.

Acts as a chaperone. In Nitratiruptor sp. (strain SB155-2), this protein is Chaperone protein DnaK.